The chain runs to 195 residues: MEGRHDNSPTQAFDKDVLELTVEDVYDISYVIGRDLLKVNTGGNREISDLQFKIVRVLEMFETMVNKYNLSLEELRMEMDNMRTETDRVVAEGSSGNINTVGPNKLVVDLKDPNRPRFTMQELKEVLQERNKLKAQLLVAQEELQLYKSGVLSSQQNMVEVNLETVPQSEPLRSSITEESKEKSTIQKLFSFRPK.

The RH1 domain maps to 8 to 92 (SPTQAFDKDV…RTETDRVVAE (85 aa)). The stretch at 58 to 149 (LEMFETMVNK…AQEELQLYKS (92 aa)) forms a coiled coil. In terms of domain architecture, RH2 spans 115 to 185 (RPRFTMQELK…ITEESKEKST (71 aa)).

Belongs to the RILPL family.

Its subcellular location is the cytoplasm. The protein resides in the cytosol. It localises to the cytoskeleton. It is found in the microtubule organizing center. The protein localises to the centrosome. Its subcellular location is the cell projection. The protein resides in the cilium. Its function is as follows. Involved in cell shape and neuronal morphogenesis, positively regulating the establishment and maintenance of dendritic spines. Plays a role in cellular protein transport. The polypeptide is RILP-like protein 2 (rilpl2) (Danio rerio (Zebrafish)).